We begin with the raw amino-acid sequence, 109 residues long: Large ribosomal subunit protein uL22 (109 aa).

This sequence belongs to the universal ribosomal protein uL22 family. As to quaternary structure, part of the 50S ribosomal subunit.

This protein binds specifically to 23S rRNA; its binding is stimulated by other ribosomal proteins, e.g. L4, L17, and L20. It is important during the early stages of 50S assembly. It makes multiple contacts with different domains of the 23S rRNA in the assembled 50S subunit and ribosome. Its function is as follows. The globular domain of the protein is located near the polypeptide exit tunnel on the outside of the subunit, while an extended beta-hairpin is found that lines the wall of the exit tunnel in the center of the 70S ribosome. The protein is Large ribosomal subunit protein uL22 of Methylibium petroleiphilum (strain ATCC BAA-1232 / LMG 22953 / PM1).